A 355-amino-acid polypeptide reads, in one-letter code: Hyaluronan and proteoglycan link protein 1 (355 aa).

Positions 1–9 (MTSLLFLVL) are excised as a propeptide. N-linked (GlcNAc...) asparagine glycans are attached at residues Asn-21 and Asn-56. Residues 38–156 (PRLLVVAEQA…EDDTAVVALN (119 aa)) form the Ig-like V-type domain. Disulfide bonds link Cys-61–Cys-140, Cys-182–Cys-253, Cys-206–Cys-227, Cys-280–Cys-350, and Cys-305–Cys-326. Link domains are found at residues 160 to 255 (VVFP…FCFT) and 260 to 352 (GRFY…YCFR).

It belongs to the HAPLN family.

It localises to the secreted. It is found in the extracellular space. The protein localises to the extracellular matrix. Its function is as follows. Stabilizes the aggregates of proteoglycan monomers with hyaluronic acid in the extracellular cartilage matrix. The chain is Hyaluronan and proteoglycan link protein 1 (HAPLN1) from Gallus gallus (Chicken).